A 217-amino-acid chain; its full sequence is uncharacterized protein (217 aa).

A signal peptide spans 1-24 (MRYTVLIALQGALLLLLLIDDGQG).

This is an uncharacterized protein from Aedes vexans (Inland floodwater mosquito).